The primary structure comprises 531 residues: Splicing factor ESS-2 (531 aa).

Disordered stretches follow at residues 104–163 and 453–531; these read RTPI…RKKK and PFAS…GDFF. Polar residues predominate over residues 105–114; it reads TPITTRSTTE. Low complexity-rich tracts occupy residues 125 to 136 and 464 to 477; these read TPGPSSASTSSA and SRPS…TPGS. Polar residues predominate over residues 480 to 498; sequence SRGSTTPGSSWSQGAQTPG.

This sequence belongs to the ESS2 family.

The protein resides in the nucleus. In terms of biological role, regulates pre-mRNA splicing. The protein is Splicing factor ESS-2 (ess-2) of Caenorhabditis elegans.